A 65-amino-acid polypeptide reads, in one-letter code: Antimicrobial peptide THP1 (65 aa).

Positions 1–25 (MRIVYLLFPFILLLAQGAAGSSLAL) are cleaved as a signal peptide. Disulfide bonds link C31/C53, C38/C59, and C43/C60. Residues 61–65 (KTLLG) constitute a propeptide that is removed on maturation.

This sequence belongs to the beta-defensin family.

The protein localises to the secreted. Bactericidal activity; inhibits S.aureus and E.coli. The sequence is that of Antimicrobial peptide THP1 from Meleagris gallopavo (Wild turkey).